Reading from the N-terminus, the 1326-residue chain is Probable serine/threonine-protein kinase gdt8 (1326 aa).

A signal peptide spans 1–22 (MINKILIKLITIIIFCFSFLFA). Topologically, residues 23-782 (EEDLIRTPPG…VDRNENLELK (760 aa)) are extracellular. 2 disordered regions span residues 419-467 (VDQN…GNQG) and 731-762 (EPPTETPTETPTETPTETPTDTPTQTPTQTPI). Composition is skewed to low complexity over residues 422–460 (NNNNNNNNNNNNNNNNNNNNNNNNNNNNNNNNNNNNNNN) and 731–761 (EPPTETPTETPTETPTETPTDTPTQTPTQTP). The chain crosses the membrane as a helical span at residues 783 to 803 (IALPICLSLALLIGIIIMICI). At 804–1326 (FKKVQSNSKL…TKEDKDLDEN (523 aa)) the chain is on the cytoplasmic side. The disordered stretch occupies residues 833–858 (IVSQPPTVIEEKPQDNSKPDDQKLIE). Positions 841 to 858 (IEEKPQDNSKPDDQKLIE) are enriched in basic and acidic residues. The region spanning 1036–1292 (IKTEQLIASY…FSEISLHLEI (257 aa)) is the Protein kinase domain. ATP is bound by residues 1042–1050 (IASYLPSKV) and lysine 1065. The active-site Proton acceptor is the aspartate 1158. The disordered stretch occupies residues 1301–1326 (MNESEESTSNHNTNSKTKEDKDLDEN). Residues 1316–1326 (KTKEDKDLDEN) show a composition bias toward basic and acidic residues.

The protein in the N-terminal section; belongs to the GDT family. In the C-terminal section; belongs to the protein kinase superfamily. TKL Ser/Thr protein kinase family.

It is found in the membrane. It catalyses the reaction L-seryl-[protein] + ATP = O-phospho-L-seryl-[protein] + ADP + H(+). It carries out the reaction L-threonyl-[protein] + ATP = O-phospho-L-threonyl-[protein] + ADP + H(+). The protein is Probable serine/threonine-protein kinase gdt8 (gdt8) of Dictyostelium discoideum (Social amoeba).